Consider the following 505-residue polypeptide: MSSVQQQPPPPRRVTNVGSLLLTPQENESLFTFLGKKCVTMSSAVVQLYAADRNCMWSKKCSGVACLVKDNPQRSYFLRIFDIKDGKLLWEQELYNNFVYNSPRGYFHTFAGDTCQVALNFANEEEAKKFRKAVTDLLGRRQRKSEKRRDPPNGPNLPMATVDIKNPEITTNRFYGPQVNNISHTKEKKKGKAKKKRLTKADIGTPSNFQHIGHVGWDPNTGFDLNNLDPELKNLFDMCGISEAQLKDRETSKVIYDFIEKTGGVEAVKNELRRQAPPPPPPSRGGPPPPPPPPHNSGPPPPPARGRGAPPPPPSRAPTAAPPPPPPSRPSVAVPPPPPNRMYPPPPPALPSSAPSGPPPPPPSVLGVGPVAPPPPPPPPPPPGPPPPPGLPSDGDHQVPTTAGNKAALLDQIREGAQLKKVEQNSRPVSCSGRDALLDQIRQGIQLKSVADGQESTPPTPAPTSGIVGALMEVMQKRSKAIHSSDEDEDEDDEEDFEDDDEWED.

Ser2 is subject to N-acetylserine. The 108-residue stretch at Leu34 to Arg141 folds into the WH1 domain. 2 disordered regions span residues Leu138 to Asp163 and His184 to Thr205. A compositionally biased stretch (basic residues) spans Lys186–Leu198. In terms of domain architecture, CRIB spans Ile203–Gly216. Ser242 bears the Phosphoserine; by TNK2 mark. Tyr256 carries the phosphotyrosine; by FAK1 and TNK2 modification. A disordered region spans residues Glu266–Lys406. 2 stretches are compositionally biased toward pro residues: residues Ala276–Ser364 and Val371–Leu391. An Omega-N-methylarginine modification is found at Arg307. WH2 domains follow at residues Asn405–Val422 and Gly433–Val450. The disordered stretch occupies residues Gln476–Asp505. 2 positions are modified to phosphoserine: Ser484 and Ser485. Residues Asp486–Asp505 are compositionally biased toward acidic residues.

Binds actin and the Arp2/3 complex. Interacts with CDC42. Interacts with FCHSD1. Interacts with FCHSD2. Binds to SH3 domains of GRB2. Interacts with the C-terminal SH3 domain of DNMBP. Interacts with SNX9. Interacts with the WW domains of PRPF40A/FBP11. Interacts with PTK2/FAK1. Interacts with PACSIN1, PACSIN2 and PACSIN3. Interacts with NOSTRIN. Binds to TNK2. Interacts with SNX33. Interacts with NONO (via second RRM domain); the interaction is direct. Component of a multiprotein complex with NONO and SFPQ; associates with the complex via direct interaction with NONO. In terms of assembly, (Microbial infection) Interacts with E.coli effector protein EspF(U). Identified in a complex containing at least WASL, BAIAP2L1 and E.coli EspF(U). As to quaternary structure, (Microbial infection) Interacts with Shigella flexneri protein IcsA. The interaction with IcsA enhances the affinity of WASL for Arp2/3, thus assembling a tight complex which has maximal activity in actin assembly. In terms of processing, phosphorylation at Ser-242, Tyr-256, Ser-484 and Ser-485 enhances actin polymerization activity.

The protein localises to the cytoplasm. It is found in the cytoskeleton. The protein resides in the nucleus. In terms of biological role, regulates actin polymerization by stimulating the actin-nucleating activity of the Arp2/3 complex. Involved in various processes, such as mitosis and cytokinesis, via its role in the regulation of actin polymerization. Together with CDC42, involved in the extension and maintenance of the formation of thin, actin-rich surface projections called filopodia. In addition to its role in the cytoplasm, also plays a role in the nucleus by regulating gene transcription, probably by promoting nuclear actin polymerization. Binds to HSF1/HSTF1 and forms a complex on heat shock promoter elements (HSE) that negatively regulates HSP90 expression. Plays a role in dendrite spine morphogenesis. Decreasing levels of DNMBP (using antisense RNA) alters apical junction morphology in cultured enterocytes, junctions curve instead of being nearly linear. In Homo sapiens (Human), this protein is Actin nucleation-promoting factor WASL (WASL).